Here is a 357-residue protein sequence, read N- to C-terminus: Cyclin-Y (357 aa).

The segment covering 1–13 (MGNSSCCLRTRSS) has biased composition (polar residues). A disordered region spans residues 1–23 (MGNSSCCLRTRSSSGEDKSYNND). A Cyclin N-terminal domain is found at 186-284 (PDHRNIYRFV…RFLECLDFNI (99 aa)).

Belongs to the cyclin family. In terms of assembly, interacts with pct-1; the interaction is required to activate pct-1.

It is found in the cytoplasm. The protein resides in the cell projection. Its subcellular location is the dendrite. It localises to the axon. In association with pct-1, regulates the trafficking of synaptic vesicle precursors in DA motor neurons by promoting anterograde trafficking to the axon and preventing dynein-dependent trafficking to the dendrite. May also regulate synaptic vesicle trafficking in DD motor neurons and in RIA interneurons. Involved in synapse formation during DD motor neuron remodeling by disassembling ventral presynaptic structures. May activate cdk-5. The polypeptide is Cyclin-Y (Caenorhabditis elegans).